The following is a 368-amino-acid chain: Putative glutamate--cysteine ligase 2 (368 aa).

This sequence belongs to the glutamate--cysteine ligase type 2 family. YbdK subfamily.

The enzyme catalyses L-cysteine + L-glutamate + ATP = gamma-L-glutamyl-L-cysteine + ADP + phosphate + H(+). In terms of biological role, ATP-dependent carboxylate-amine ligase which exhibits weak glutamate--cysteine ligase activity. The protein is Putative glutamate--cysteine ligase 2 of Pseudomonas putida (strain ATCC 47054 / DSM 6125 / CFBP 8728 / NCIMB 11950 / KT2440).